The chain runs to 245 residues: Large ribosomal subunit protein eL29 (245 aa).

The span at 1–26 (MAKSKNHTTHNQSRKWHRNGIKKPRS) shows a compositional bias: basic residues. Disordered regions lie at residues 1–33 (MAKSKNHTTHNQSRKWHRNGIKKPRSQRYESLK) and 114–245 (RGLR…AKAP). Position 5 is an N6-methyllysine (Lys-5). Ser-31 is subject to Phosphoserine. N6-acetyllysine is present on Lys-33. Residues 134 to 150 (KGKVKAQIKAQAQAQIK) are compositionally biased toward low complexity. Residues 157–171 (AQAETKPKAQAETKP) are compositionally biased toward basic and acidic residues. Composition is skewed to low complexity over residues 172-226 (KAQA…ATPA) and 234-245 (PPKGAQPPAKAP).

Belongs to the eukaryotic ribosomal protein eL29 family. Component of the large ribosomal subunit.

It localises to the cytoplasm. Its function is as follows. Component of the large ribosomal subunit. The ribosome is a large ribonucleoprotein complex responsible for the synthesis of proteins in the cell. The polypeptide is Large ribosomal subunit protein eL29 (RPL29) (Oryctolagus cuniculus (Rabbit)).